Consider the following 364-residue polypeptide: Protein BRI1-5 ENHANCED 1 (364 aa).

A compositionally biased stretch (acidic residues) spans 1-11 (MVREEQEEDDN). The tract at residues 1-22 (MVREEQEEDDNNNNNNGGGERK) is disordered. Residues 44 to 49 (GGSGFV), R69, 98 to 99 (DL), Y202, K206, V232, and S244 each bind NADP(+). Catalysis depends on K206, which acts as the Proton donor.

This sequence belongs to the NAD(P)-dependent epimerase/dehydratase family. Monomer. In terms of tissue distribution, mainly present in cell elongating-containing tissues. Strongly expressed in roots and flowers, also observed in petioles, stems, leaves and siliques.

It localises to the cytoplasm. The protein operates within plant hormone biosynthesis; brassinosteroid biosynthesis. Its function is as follows. Element of the brassinosteroid metabolic pathway that regulates typhasterol (TY), castasterone (CS) and brassinolide (BL) levels. Involved in the control of organ elongation. The chain is Protein BRI1-5 ENHANCED 1 from Arabidopsis thaliana (Mouse-ear cress).